The primary structure comprises 220 residues: Deoxyribose-phosphate aldolase 1 (220 aa).

Aspartate 89 serves as the catalytic Proton donor/acceptor. The active-site Schiff-base intermediate with acetaldehyde is lysine 151. The active-site Proton donor/acceptor is the lysine 180.

The protein belongs to the DeoC/FbaB aldolase family. DeoC type 1 subfamily.

It is found in the cytoplasm. The catalysed reaction is 2-deoxy-D-ribose 5-phosphate = D-glyceraldehyde 3-phosphate + acetaldehyde. The protein operates within carbohydrate degradation; 2-deoxy-D-ribose 1-phosphate degradation; D-glyceraldehyde 3-phosphate and acetaldehyde from 2-deoxy-alpha-D-ribose 1-phosphate: step 2/2. Catalyzes a reversible aldol reaction between acetaldehyde and D-glyceraldehyde 3-phosphate to generate 2-deoxy-D-ribose 5-phosphate. In Staphylococcus aureus (strain COL), this protein is Deoxyribose-phosphate aldolase 1.